We begin with the raw amino-acid sequence, 161 residues long: E3 ubiquitin ligase complex SCF subunit sconC (161 aa).

The interaction with the F-box domain of F-box proteins stretch occupies residues 102–161 (ILAANYLDIKGLLDVGCKTVANMIKGKSPEEIRKTFNIQNDFTPEEEDQIRRENEWAEDR).

This sequence belongs to the SKP1 family. In terms of assembly, component of the SCF (SKP1-CUL1-F-box protein) E3 ubiquitin ligase complexes.

The protein operates within protein modification; protein ubiquitination. In terms of biological role, essential component of the SCF (SKP1-CUL1-F-box protein) E3 ubiquitin ligase complexes, which mediate the ubiquitination and subsequent proteasomal degradation of target proteins. Controls sulfur metabolite repression, probably by mediating the inactivation or degradation of the metR transcription factor. In Aspergillus flavus (strain ATCC 200026 / FGSC A1120 / IAM 13836 / NRRL 3357 / JCM 12722 / SRRC 167), this protein is E3 ubiquitin ligase complex SCF subunit sconC (sconC).